The chain runs to 328 residues: Methionyl-tRNA formyltransferase (328 aa).

110–113 (SLLP) provides a ligand contact to (6S)-5,6,7,8-tetrahydrofolate.

Belongs to the Fmt family.

It catalyses the reaction L-methionyl-tRNA(fMet) + (6R)-10-formyltetrahydrofolate = N-formyl-L-methionyl-tRNA(fMet) + (6S)-5,6,7,8-tetrahydrofolate + H(+). Functionally, attaches a formyl group to the free amino group of methionyl-tRNA(fMet). The formyl group appears to play a dual role in the initiator identity of N-formylmethionyl-tRNA by promoting its recognition by IF2 and preventing the misappropriation of this tRNA by the elongation apparatus. This chain is Methionyl-tRNA formyltransferase, found in Prochlorococcus marinus (strain AS9601).